Reading from the N-terminus, the 227-residue chain is Small ribosomal subunit protein uS3 (227 aa).

The KH type-2 domain maps to 39–107; it reads VRQLLQKRLK…PVHITIEEVR (69 aa).

Belongs to the universal ribosomal protein uS3 family. Part of the 30S ribosomal subunit. Forms a tight complex with proteins S10 and S14.

Its function is as follows. Binds the lower part of the 30S subunit head. Binds mRNA in the 70S ribosome, positioning it for translation. The sequence is that of Small ribosomal subunit protein uS3 (rpsC) from Coxiella burnetii (strain RSA 493 / Nine Mile phase I).